The following is a 425-amino-acid chain: Serine--tRNA ligase (425 aa).

An L-serine-binding site is contributed by 233 to 235 (TAE). 264 to 266 (RRE) is an ATP binding site. Residue Glu287 participates in L-serine binding. 351–354 (EISS) is an ATP binding site. Ser385 contacts L-serine.

It belongs to the class-II aminoacyl-tRNA synthetase family. Type-1 seryl-tRNA synthetase subfamily. As to quaternary structure, homodimer. The tRNA molecule binds across the dimer.

It is found in the cytoplasm. It carries out the reaction tRNA(Ser) + L-serine + ATP = L-seryl-tRNA(Ser) + AMP + diphosphate + H(+). The catalysed reaction is tRNA(Sec) + L-serine + ATP = L-seryl-tRNA(Sec) + AMP + diphosphate + H(+). The protein operates within aminoacyl-tRNA biosynthesis; selenocysteinyl-tRNA(Sec) biosynthesis; L-seryl-tRNA(Sec) from L-serine and tRNA(Sec): step 1/1. Functionally, catalyzes the attachment of serine to tRNA(Ser). Is also able to aminoacylate tRNA(Sec) with serine, to form the misacylated tRNA L-seryl-tRNA(Sec), which will be further converted into selenocysteinyl-tRNA(Sec). In Synechococcus sp. (strain WH7803), this protein is Serine--tRNA ligase.